Here is a 492-residue protein sequence, read N- to C-terminus: Vacuolar fusion protein CCZ1 homolog (492 aa).

Residues 255–275 (SVHAGPTSSSSNGTASVERPL) are disordered. Residues 260–269 (PTSSSSNGTA) show a composition bias toward polar residues.

This sequence belongs to the CCZ1 family. In terms of assembly, interacts with MON1.

It is found in the endosome. It localises to the prevacuolar compartment. Functionally, plays an important role in membrane trafficking through the secretory apparatus. In complex with MON1, acts as a guanine exchange factor (GEF) for Rab7 protein family. Promotes the exchange of GDP to GTP, converting it from an inactive GDP-bound form into an active GTP-bound form. The active form is involved in protein trafficking from prevacuolar compartments (PVCs) to vacuoles. May serve as a linker between Rab5 and Rab7 protein families in PVCs and mediate PVC maturation. This is Vacuolar fusion protein CCZ1 homolog from Oryza sativa subsp. japonica (Rice).